A 178-amino-acid polypeptide reads, in one-letter code: Hypoxanthine phosphoribosyltransferase (178 aa).

Arg43 and Gly44 together coordinate diphosphate. Position 99 (Glu99) interacts with GMP. Glu99 serves as a coordination point for IMP. 2 residues coordinate Mg(2+): Glu99 and Asp100. Asp103 functions as the Proton acceptor in the catalytic mechanism. Residues 103–108 (DSGNTL), Lys131, and Asp159 contribute to the GMP site. IMP contacts are provided by residues 103 to 108 (DSGNTL) and Lys131. Arg165 contacts diphosphate.

Belongs to the purine/pyrimidine phosphoribosyltransferase family. As to quaternary structure, homotetramer. It depends on Mg(2+) as a cofactor.

It is found in the cytoplasm. The catalysed reaction is IMP + diphosphate = hypoxanthine + 5-phospho-alpha-D-ribose 1-diphosphate. The enzyme catalyses GMP + diphosphate = guanine + 5-phospho-alpha-D-ribose 1-diphosphate. It functions in the pathway purine metabolism; IMP biosynthesis via salvage pathway; IMP from hypoxanthine: step 1/1. Functionally, purine salvage pathway enzyme which catalyzes the transfer of the ribosyl-5-phosphate group from 5-phospho-alpha-D-ribose 1-diphosphate (PRPP) to the N9 position of hypoxanthine to yield IMP (inosine 5'-monophosphate). To a lesser extent, can also act on guanine leading to GMP, but shows a highly less efficient activity with xanthine. In Shigella flexneri, this protein is Hypoxanthine phosphoribosyltransferase (hpt).